The primary structure comprises 314 residues: Acetaldehyde dehydrogenase 3 (314 aa).

Cys-132 serves as the catalytic Acyl-thioester intermediate. Residues Ser-163–Asn-171 and Asn-291 each bind NAD(+).

It belongs to the acetaldehyde dehydrogenase family.

The catalysed reaction is acetaldehyde + NAD(+) + CoA = acetyl-CoA + NADH + H(+). In Dechloromonas aromatica (strain RCB), this protein is Acetaldehyde dehydrogenase 3.